The sequence spans 248 residues: Mannose-binding protein C (248 aa).

A signal peptide spans 1–20 (MSLFPSLPLLLLSMVAASYS). In terms of domain architecture, Collagen-like spans 42-99 (GINGFPGKDGRDGTKGEKGEPGQGLRGLQGPPGKLGPPGNPGPSGSPGPKGQKGDPGK). The disordered stretch occupies residues 43–113 (INGFPGKDGR…DSSLAASERK (71 aa)). Position 47 is a hydroxyproline (Pro-47). Residues 49–61 (KDGRDGTKGEKGE) show a composition bias toward basic and acidic residues. Hydroxyproline is present on residues Pro-73, Pro-79, Pro-82, and Pro-88. Positions 75–87 (KLGPPGNPGPSGS) are enriched in pro residues. Basic and acidic residues predominate over residues 93–102 (QKGDPGKSPD). A coiled-coil region spans residues 112–130 (RKALQTEMARIKKWLTFSL). The C-type lectin domain maps to 134-245 (VGNKFFLTNG…CSTSHLAVCE (112 aa)). Intrachain disulfides connect Cys-155-Cys-244 and Cys-222-Cys-236.

As to quaternary structure, oligomeric complex of 3 or more homotrimers. Interacts with MASP1 and MASP2. Interacts with MEP1A and MEP1B and may inhibit their catalytic activity. Interacts with CR1 (via Sushi 24 and Sushi 25 domains). (Microbial infection) Interacts with SARS coronavirus-2/SARS-CoV-2 Spike glycoprotein homotrimer; the interaction is calcium-dependent and modulated by Spike glycoprotein glycosylation state. Plasma protein produced mainly in the liver.

The protein localises to the secreted. Its function is as follows. Calcium-dependent lectin involved in innate immune defense. Binds mannose, fucose and N-acetylglucosamine on different microorganisms and activates the lectin complement pathway. Binds to late apoptotic cells, as well as to apoptotic blebs and to necrotic cells, but not to early apoptotic cells, facilitating their uptake by macrophages. May bind DNA. Upon SARS coronavirus-2/SARS-CoV-2 infection, activates the complement lectin pathway which leads to the inhibition SARS-CoV-2 infection and a reduction of the induced inflammatory response. This Homo sapiens (Human) protein is Mannose-binding protein C.